Reading from the N-terminus, the 159-residue chain is MQLAIVAVGHKMPAWIETGFNEYTKRMPPELRIELREVKPETRSSSNNAATVMQREAARIEAVLGSLSKQCRIVALDERGKDWTTVQLAEQLTGWQREGGDVAFLIGGADGLDPALKARAHTLLRISSLTLPHGMVRVLLAEQLYRAWSVTQNHPYHRA.

Residues Leu76, Gly107, and 126-131 (ISSLTL) each bind S-adenosyl-L-methionine.

Belongs to the RNA methyltransferase RlmH family. As to quaternary structure, homodimer.

The protein localises to the cytoplasm. The catalysed reaction is pseudouridine(1915) in 23S rRNA + S-adenosyl-L-methionine = N(3)-methylpseudouridine(1915) in 23S rRNA + S-adenosyl-L-homocysteine + H(+). Specifically methylates the pseudouridine at position 1915 (m3Psi1915) in 23S rRNA. The protein is Ribosomal RNA large subunit methyltransferase H of Cupriavidus metallidurans (strain ATCC 43123 / DSM 2839 / NBRC 102507 / CH34) (Ralstonia metallidurans).